The chain runs to 463 residues: Hexokinase-7 (463 aa).

Residues Ala-7 to Ala-456 enclose the Hexokinase domain. Positions Asn-62–Ile-199 are hexokinase small subdomain. ADP contacts are provided by Gly-76, Thr-77, and Asn-78. D-glucose contacts are provided by Thr-165, Lys-166, Asn-200, and Asp-201. The interval Asn-200–Asp-445 is hexokinase large subdomain. Thr-224 is an ADP binding site. Asn-227, Glu-255, and Glu-286 together coordinate D-glucose. Gly-410 contacts ADP.

Belongs to the hexokinase family. As to expression, expressed in roots, leaves, flowers, immature seeds and seed coat.

Its subcellular location is the cytoplasm. The enzyme catalyses a D-hexose + ATP = a D-hexose 6-phosphate + ADP + H(+). The catalysed reaction is D-fructose + ATP = D-fructose 6-phosphate + ADP + H(+). It catalyses the reaction D-glucose + ATP = D-glucose 6-phosphate + ADP + H(+). Its pathway is carbohydrate metabolism; hexose metabolism. It participates in carbohydrate degradation; glycolysis; D-glyceraldehyde 3-phosphate and glycerone phosphate from D-glucose: step 1/4. Fructose and glucose phosphorylating enzyme. Functions in sugar signaling via a glycolysis-dependent manner under aerobic conditions, but its signaling role is suppressed when oxygen is deficient. The protein is Hexokinase-7 (HXK7) of Oryza sativa subsp. japonica (Rice).